A 652-amino-acid polypeptide reads, in one-letter code: Sodium-dependent phosphate transporter 2 (652 aa).

The Extracellular segment spans residues 1 to 5 (MAMDE). The helical transmembrane segment at 6–26 (YLWMVILGFIIAFILAFSVGA) threads the bilayer. Residues 27–46 (NDVANSFGTAVGSGVVTLRQ) lie on the Cytoplasmic side of the membrane. The chain crosses the membrane as a helical span at residues 47 to 67 (ACILASIFETTGSVLLGAKVG). Residues 68-86 (ETIRKGIIDVNLYNETVET) lie on the Extracellular side of the membrane. A glycan (N-linked (GlcNAc...) asparagine) is linked at Asn81. The helical transmembrane segment at 87–107 (LMAGEVSAMVGSAVWQLIASF) threads the bilayer. Over 108–109 (LR) the chain is Cytoplasmic. Residues 110 to 130 (LPISGTHCIVGSTIGFSLVAI) form a helical membrane-spanning segment. Residues 131–142 (GTKGVQWMELVK) are Extracellular-facing. Residues 143-163 (IVASWFISPLLSGFMSGLLFV) traverse the membrane as a helical segment. Over 164 to 190 (LIRIFILKKEDPVPNGLRALPVFYAAT) the chain is Cytoplasmic. Residues 191 to 211 (IAINVFSIMYTGAPVLGLVLP) traverse the membrane as a helical segment. The Extracellular portion of the chain corresponds to 212-213 (MW). The helical transmembrane segment at 214–234 (AIALISFGVALLFAFFVWLFV) threads the bilayer. Topologically, residues 235 to 482 (CPWMRRKITG…EEKEEKDAPE (248 aa)) are cytoplasmic. Phosphoserine is present on residues Ser253, Ser256, Ser259, and Ser268. A disordered region spans residues 273–307 (ELPGAKANDDSTIPLTGAAGETLGTSEGTSAGSHP). Positions 295-304 (LGTSEGTSAG) are enriched in polar residues. Phosphoserine is present on residues Ser316 and Ser385. Residues 458 to 477 (SELADPDQPREDPAEEEKEE) are disordered. Residues 483–503 (VHLLFHFLQVLTACFGSFAHG) traverse the membrane as a helical segment. At 504–530 (GNDVSNAIGPLVALWLIYKQGGVTQEA) the chain is on the extracellular side. Residues 531–551 (ATPVWLLFYGGVGICTGLWVW) traverse the membrane as a helical segment. Residues 552–571 (GRRVIQTMGKDLTPITPSSG) lie on the Cytoplasmic side of the membrane. The chain crosses the membrane as a helical span at residues 572–586 (FTIELASAFTVVIAS). The Extracellular segment spans residues 587–593 (NIGLPVS). Residues 594-609 (TTHCKVGSVVAVGWIR) form a helical membrane-spanning segment. At 610-621 (SRKAVDWRLFRN) the chain is on the cytoplasmic side. A helical transmembrane segment spans residues 622 to 642 (IFVAWFVTVPVAGLFSAAVMA). At 643–652 (LLMYGILPYV) the chain is on the extracellular side.

It belongs to the inorganic phosphate transporter (PiT) (TC 2.A.20) family. Homodimer. In terms of tissue distribution, ubiquitously expressed.

The protein localises to the cell membrane. It is found in the apical cell membrane. It carries out the reaction 2 Na(+)(out) + phosphate(out) = 2 Na(+)(in) + phosphate(in). In terms of biological role, sodium-phosphate symporter which preferentially transports the monovalent form of phosphate with a stoichiometry of two sodium ions per phosphate ion. Plays a critical role in the determination of bone quality and strength by providing phosphate for bone mineralization. Required to maintain normal cerebrospinal fluid phosphate levels. Mediates phosphate-induced calcification of vascular smooth muscle cells (VCMCs) and can functionally compensate for loss of SLC20A1 in VCMCs. Its function is as follows. (Microbial infection) Functions as a retroviral receptor and confers human cells susceptibility to infection to amphotropic murine leukemia virus (A-MuLV), 10A1 murine leukemia virus (10A1 MLV) and some feline leukemia virus subgroup B (FeLV-B) variants. This chain is Sodium-dependent phosphate transporter 2 (SLC20A2), found in Homo sapiens (Human).